The following is a 399-amino-acid chain: Sex hormone-binding globulin (399 aa).

Residues 1–29 form the signal peptide; the sequence is MENRDSVASLLLLLLLLPPPHTHQGQVLR. Laminin G-like domains lie at 43 to 214 and 221 to 387; these read RYLS…LGNC and GLFF…THSC. Residue Asn160 is glycosylated (N-linked (GlcNAc...) asparagine). Cys191 and Cys214 are joined by a disulfide. Residues Asn270, Asn353, Asn377, and Asn393 are each glycosylated (N-linked (GlcNAc...) asparagine). The cysteines at positions 359 and 387 are disulfide-linked.

Homodimer. In terms of processing, differentially glycosylated in liver (SHBG) and testis (ABP).

It is found in the secreted. Functionally, functions as an androgen transport protein, but may also be involved in receptor mediated processes. Each dimer binds one molecule of steroid. Specific for 5-alpha-dihydrotestosterone, testosterone, and 17-beta-estradiol. Regulates the plasma metabolic clearance rate of steroid hormones by controlling their plasma concentration. The sequence is that of Sex hormone-binding globulin (SHBG) from Phodopus sungorus (Striped hairy-footed hamster).